A 245-amino-acid chain; its full sequence is Acetoacetate decarboxylase (245 aa).

The active-site Schiff-base intermediate with acetoacetate is the Lys-116.

Belongs to the ADC family.

It carries out the reaction acetoacetate + H(+) = acetone + CO2. Its function is as follows. Catalyzes the conversion of acetoacetate to acetone and carbon dioxide. In Acidiphilium cryptum (strain JF-5), this protein is Acetoacetate decarboxylase.